The primary structure comprises 507 residues: Subtilisin-like protease 1 (507 aa).

Residues 1-19 (MGVFRFISISLAAVSAANA) form the signal peptide. A propeptide spanning residues 20-116 (AQILSMPHAQ…VEPDTIISVN (97 aa)) is cleaved from the precursor. The region spanning 34 to 113 (SYIVMMKDDT…VMFVEPDTII (80 aa)) is the Inhibitor I9 domain. The region spanning 126 to 400 (SWGLARISNS…NVLISNGGAK (275 aa)) is the Peptidase S8 domain. Catalysis depends on charge relay system residues D158 and H190. The interval 175-198 (GSNQVNDGDDRDGSGHGTHTSGTM) is disordered. N251 is a glycosylation site (N-linked (GlcNAc...) asparagine). A compositionally biased stretch (polar residues) spans 282-294 (NENQDARSSSPAS). The disordered stretch occupies residues 282 to 312 (NENQDARSSSPASEPSVCTVGSSAEDDSRSS). S345 acts as the Charge relay system in catalysis. Residues 378-394 (SSSITDVGPGTPTNVLI) show a composition bias toward polar residues. The tract at residues 378–486 (SSSITDVGPG…YPGGDNFDFD (109 aa)) is disordered. Composition is skewed to pro residues over residues 405-428 (KPAP…PSQP) and 438-449 (EPFPGEPFPGEP). Residues 450–461 (FPGESSPGESAP) are compositionally biased toward low complexity. The segment covering 462–476 (APAPMPPSPQHPHTP) has biased composition (pro residues).

This sequence belongs to the peptidase S8 family.

Its subcellular location is the secreted. In terms of biological role, secreted subtilisin-like serine protease with keratinolytic activity that contributes to pathogenicity. The polypeptide is Subtilisin-like protease 1 (SUB1) (Trichophyton equinum (Horse ringworm fungus)).